The following is a 798-amino-acid chain: Integrin beta-1 (798 aa).

The first 20 residues, 1-20, serve as a signal peptide directing secretion; the sequence is MNLQLIFWIGLISSVCCVFG. At 21–728 the chain is on the extracellular side; that stretch reads QADENRCLKA…ETPECPTGPD (708 aa). Residues 26-76 form the PSI domain; the sequence is RCLKANAKSCGECIQAGPNCGWCTNSTFLQEGMPTSARCDDLEALKKKGCH. 28 disulfide bridges follow: cysteine 27-cysteine 45, cysteine 35-cysteine 464, cysteine 38-cysteine 64, cysteine 48-cysteine 75, cysteine 207-cysteine 213, cysteine 261-cysteine 301, cysteine 401-cysteine 415, cysteine 435-cysteine 462, cysteine 466-cysteine 486, cysteine 477-cysteine 489, cysteine 491-cysteine 500, cysteine 502-cysteine 533, cysteine 516-cysteine 531, cysteine 525-cysteine 536, cysteine 538-cysteine 553, cysteine 555-cysteine 576, cysteine 560-cysteine 574, cysteine 568-cysteine 579, cysteine 581-cysteine 590, cysteine 592-cysteine 615, cysteine 599-cysteine 613, cysteine 607-cysteine 618, cysteine 620-cysteine 630, cysteine 633-cysteine 636, cysteine 640-cysteine 691, cysteine 646-cysteine 665, cysteine 649-cysteine 661, and cysteine 699-cysteine 723. Asparagine 50 carries an N-linked (GlcNAc...) asparagine glycan. The segment covering 75–91 has biased composition (basic and acidic residues); that stretch reads CHPNDIENPRGSKDIKK. Positions 75-105 are disordered; sequence CHPNDIENPRGSKDIKKNKNVTNRSKGTAEK. Asparagine 94 and asparagine 97 each carry an N-linked (GlcNAc...) asparagine glycan. The 239-residue stretch at 140–378 folds into the VWFA domain; sequence DYPIDLYYLM…QLIIDAYNSL (239 aa). The Mg(2+) site is built by serine 152 and serine 154. Residues serine 154, aspartate 157, aspartate 158, and glutamate 189 each coordinate Ca(2+). Residues 207–213 are CX3CL1-binding; the sequence is CTNEQNC. Asparagine 212 is a glycosylation site (N-linked (GlcNAc...) asparagine). 4 residues coordinate Ca(2+): asparagine 244, aspartate 246, proline 248, and glutamate 249. Glutamate 249 contributes to the Mg(2+) binding site. Asparagine 269 carries N-linked (GlcNAc...) asparagine glycosylation. A CX3CL1-binding region spans residues 295–314; that stretch reads LPNDGQCHLENDVYTMSHYY. Alanine 362 contributes to the Ca(2+) binding site. Asparagine 363, asparagine 406, and asparagine 417 each carry an N-linked (GlcNAc...) asparagine glycan. The interval 383-465 is interaction with TMEM182; that stretch reads ILENSKLPEG…IILQFICECE (83 aa). I-EGF domains are found at residues 466–501, 502–554, 555–591, and 592–631; these read CQGEGIPGSPKCHDGNGTFECGACRCNEGRVGRHCE, CSTD…KFCE, CDNFNCDRSNGLICGGNGVCKCRVCECNPNYTGSACD, and CSLDTTSCMAVNGQICNGRGVCECGACKCTDPKFQGPTCE. Residue asparagine 481 is glycosylated (N-linked (GlcNAc...) asparagine). Asparagine 520 is a glycosylation site (N-linked (GlcNAc...) asparagine). N-linked (GlcNAc...) asparagine glycosylation occurs at asparagine 584. A glycan (N-linked (GlcNAc...) asparagine) is linked at asparagine 669. The helical transmembrane segment at 729–749 threads the bilayer; the sequence is IIPIVAGVVAGIVLIGLALLL. The Cytoplasmic portion of the chain corresponds to 750–798; it reads IWKLLMIIHDRREFAKFEKEKMNAKWDTGENPIYKSAVTTVVNPKYEGK. The segment at 762–767 is signal for sorting from recycling endosomes; interaction with ACAP1; the sequence is EFAKFE. Threonine 777 is modified (phosphothreonine). At tyrosine 783 the chain carries Phosphotyrosine. Position 785 is a phosphoserine (serine 785). The interaction with ITGB1BP1 stretch occupies residues 785–792; sequence SAVTTVVN. Position 789 is a phosphothreonine (threonine 789). Lysine 794 carries the post-translational modification N6-acetyllysine; alternate. Lysine 794 participates in a covalent cross-link: Glycyl lysine isopeptide (Lys-Gly) (interchain with G-Cter in SUMO1); alternate.

This sequence belongs to the integrin beta chain family. In terms of assembly, interacts with seprase FAP (seprase); the interaction occurs at the cell surface of invadopodia membrane in a collagen-dependent manner. Heterodimer of an alpha and a beta subunit. Beta-1 associates with either alpha-1, alpha-2, alpha-3, alpha-4, alpha-5, alpha-6, alpha-7, alpha-8, alpha-9, alpha-10, alpha-11 or alpha-V. ITGA6:ITGB1 is found in a complex with CD9; interaction takes place in oocytes and is involved in sperm-egg fusion. Binds LGALS3BP and NMRK2, when associated with alpha-7, but not with alpha-5. Interacts with FLNB, FLNC and RANBP9. Interacts with KRT1 in the presence of RACK1 and SRC. Interacts with JAML; integrin alpha-4/beta-1 may regulate leukocyte to endothelial cells adhesion by controlling JAML homodimerization. Interacts with RAB21. Interacts (via the cytoplasmic region) with RAB25 (via the hypervariable C-terminal region). Interacts with MYO10. Interacts with ITGB1BP1 (via C-terminal region); the interaction is a prerequisite for focal adhesion disassembly. Interacts with TLN1; the interaction is prevented by competitive binding of ITGB1BP1. Interacts with ACAP1; required for ITGB1 recycling. Interacts with ASAP3. Interacts with FERMT2; the interaction is inhibited in presence of ITGB1BP1. Interacts with DAB2. Interacts with FGR and HCK. Interacts with EMP2; the interaction may be direct or indirect and ITGB1 has a heterodimer form. ITGA5:ITGB1 interacts with CCN3. ITGA4:ITGB1 is found in a ternary complex with CX3CR1 and CX3CL1. ITGA5:ITGB1 interacts with FBN1. ITGA5:ITGB1 interacts with IL1B. Interacts with MDK. ITGA4:ITGB1 interacts with MDK; this interaction mediates MDK-induced osteoblast cells migration through PXN phosphorylation. ITGA6:ITGB1 interacts with MDK; this interaction mediates MDK-induced neurite-outgrowth. ITGA5:ITGB1 interacts with ACE2. Interacts with TMEM182 and LAMB1. Interacts with tensin TNS3; TNS3 also interacts with PEAK1, thus acting as an adapter molecule to bridge the association of PEAK1 with ITGB1. Interacts with tensin TNS4; the interaction displaces tensin TNS3 from the ITGB1 cytoplasmic tail and promotes ITGB1 stability. Integrin ITGA9:ITGB1 interacts with SPP1/OPN (via N-terminus). Integrin ITGA9:ITGB1 interacts with TNC/TNFN3 (via the 3rd Fibronectin type-III domain). Integrins ITGA4:ITGB1 and ITGA9:ITGB1 interact with SVEP1 (via Sushi domain 21); thereby inhibit Ca(2+) intracellular signaling and as a result repress vasocontraction. ITGA4:ITGB1 and ITGA5:ITGB1 interacts with SELP. Interacts with CD248. ITGA5:ITGB1 interacts with IGFBP1. ITGA4:ITGB1 interacts with BCAM. Interacts with ADGRG6. As to quaternary structure, interacts with the C-terminal region of FLNC. Interacts with filamin FLNA isoform 3/VAR-1. Interacts with ACE2. Interacts with alpha-7B in cardiomyocytes of adult heart and alpha-7A and alpha-7B in adult skeletal muscle. Interacts with filamin FLNA isoform 3/VAR-1.

It localises to the cell membrane. It is found in the cell projection. The protein localises to the invadopodium membrane. The protein resides in the ruffle membrane. Its subcellular location is the recycling endosome. It localises to the melanosome. It is found in the lamellipodium. The protein localises to the ruffle. The protein resides in the cell junction. Its subcellular location is the focal adhesion. It localises to the sarcolemma. Its function is as follows. Integrins alpha-1/beta-1, alpha-2/beta-1, alpha-10/beta-1 and alpha-11/beta-1 are receptors for collagen. Integrins alpha-1/beta-1 and alpha-2/beta-2 recognize the proline-hydroxylated sequence G-F-P-G-E-R in collagen. Integrins alpha-2/beta-1, alpha-3/beta-1, alpha-4/beta-1, alpha-5/beta-1, alpha-8/beta-1, alpha-10/beta-1, alpha-11/beta-1 and alpha-V/beta-1 are receptors for fibronectin. Alpha-4/beta-1 recognizes one or more domains within the alternatively spliced CS-1 and CS-5 regions of fibronectin. Integrin alpha-5/beta-1 is a receptor for fibrinogen. Integrin alpha-1/beta-1, alpha-2/beta-1, alpha-6/beta-1 and alpha-7/beta-1 are receptors for lamimin. Integrin alpha-6/beta-1 (ITGA6:ITGB1) is present in oocytes and is involved in sperm-egg fusion. Integrin alpha-4/beta-1 is a receptor for VCAM1 and recognizes the sequence Q-I-D-S in VCAM1. Integrin alpha-9/beta-1 is a receptor for VCAM1, cytotactin and osteopontin. It recognizes the sequence A-E-I-D-G-I-E-L in cytotactin. Integrin alpha-3/beta-1 is a receptor for epiligrin, thrombospondin and CSPG4. Integrin alpha-3/beta-1 provides a docking site for FAP (seprase) at invadopodia plasma membranes in a collagen-dependent manner and hence may participate in the adhesion, formation of invadopodia and matrix degradation processes, promoting cell invasion. Alpha-3/beta-1 may mediate with LGALS3 the stimulation by CSPG4 of endothelial cells migration. Integrin alpha-V/beta-1 is a receptor for vitronectin. Beta-1 integrins recognize the sequence R-G-D in a wide array of ligands. When associated with alpha-7/beta-1 integrin, regulates cell adhesion and laminin matrix deposition. Involved in promoting endothelial cell motility and angiogenesis. Involved in osteoblast compaction through the fibronectin fibrillogenesis cell-mediated matrix assembly process and the formation of mineralized bone nodules. May be involved in up-regulation of the activity of kinases such as PKC via binding to KRT1. Together with KRT1 and RACK1, serves as a platform for SRC activation or inactivation. Plays a mechanistic adhesive role during telophase, required for the successful completion of cytokinesis. ITGA4:ITGB1 binds to fractalkine (CX3CL1) and may act as its coreceptor in CX3CR1-dependent fractalkine signaling. ITGA4:ITGB1 and ITGA5:ITGB1 bind to PLA2G2A via a site (site 2) which is distinct from the classical ligand-binding site (site 1) and this induces integrin conformational changes and enhanced ligand binding to site 1. ITGA5:ITGB1 acts as a receptor for fibrillin-1 (FBN1) and mediates R-G-D-dependent cell adhesion to FBN1. ITGA5:ITGB1 acts as a receptor for fibronectin FN1 and mediates R-G-D-dependent cell adhesion to FN1. ITGA5:ITGB1 is a receptor for IL1B and binding is essential for IL1B signaling. ITGA5:ITGB3 is a receptor for soluble CD40LG and is required for CD40/CD40LG signaling. Plays an important role in myoblast differentiation and fusion during skeletal myogenesis. ITGA9:ITGB1 may play a crucial role in SVEP1/polydom-mediated myoblast cell adhesion. Integrins ITGA9:ITGB1 and ITGA4:ITGB1 repress PRKCA-mediated L-type voltage-gated channel Ca(2+) influx and ROCK-mediated calcium sensitivity in vascular smooth muscle cells via their interaction with SVEP1, thereby inhibit vasocontraction. This chain is Integrin beta-1 (ITGB1), found in Bos taurus (Bovine).